Consider the following 941-residue polypeptide: Glycine dehydrogenase (decarboxylating) (941 aa).

Lysine 692 bears the N6-(pyridoxal phosphate)lysine mark.

This sequence belongs to the GcvP family. In terms of assembly, the glycine cleavage system is composed of four proteins: P, T, L and H. Pyridoxal 5'-phosphate is required as a cofactor.

The enzyme catalyses N(6)-[(R)-lipoyl]-L-lysyl-[glycine-cleavage complex H protein] + glycine + H(+) = N(6)-[(R)-S(8)-aminomethyldihydrolipoyl]-L-lysyl-[glycine-cleavage complex H protein] + CO2. Functionally, the glycine cleavage system catalyzes the degradation of glycine. The P protein binds the alpha-amino group of glycine through its pyridoxal phosphate cofactor; CO(2) is released and the remaining methylamine moiety is then transferred to the lipoamide cofactor of the H protein. In Mycobacterium avium (strain 104), this protein is Glycine dehydrogenase (decarboxylating).